The chain runs to 186 residues: Large ribosomal subunit protein bL9 (186 aa).

Residues 151 to 167 (PEEAEKQARGEAIMREE) show a composition bias toward basic and acidic residues. The segment at 151–186 (PEEAEKQARGEAIMREESEYELETGEEVAEGPEQTA) is disordered. Positions 168 to 180 (SEYELETGEEVAE) are enriched in acidic residues.

This sequence belongs to the bacterial ribosomal protein bL9 family.

Binds to the 23S rRNA. The polypeptide is Large ribosomal subunit protein bL9 (Acidiphilium cryptum (strain JF-5)).